Consider the following 1243-residue polypeptide: Plasma membrane calcium-transporting ATPase 2 (1243 aa).

Polar residues predominate over residues 1-13 (MGDMTNSDFYSKN). The tract at residues 1–24 (MGDMTNSDFYSKNQRNESSHGGEF) is disordered. Residues 1 to 94 (MGDMTNSDFY…NFIPPKKPKT (94 aa)) lie on the Cytoplasmic side of the membrane. Serine 18 carries the post-translational modification Phosphoserine. The chain crosses the membrane as a helical span at residues 95-115 (FLQLVWEALQDVTLIILEIAA). Over 116-152 (IISLGLSFYHPPGEGNEGCATAQGGAEDEGEAEAGWI) the chain is Extracellular. Residues 153–173 (EGAAILLSVICVVLVTAFNDW) form a helical membrane-spanning segment. Over 174 to 390 (SKEKQFRGLQ…KEKSVLQGKL (217 aa)) the chain is Cytoplasmic. Residues 334-381 (GKMQDGNVDASQSKAKQQDGAAAMEMQPLKSAEGGDADDRKKASMHKK) are disordered. A helical transmembrane segment spans residues 391-410 (TKLAVQIGKAGLVMSAITVI). Over 411–443 (ILVLYFTVDTFVVNKKPWLPECTPVYVQYFVKF) the chain is Extracellular. The chain crosses the membrane as a helical span at residues 444-461 (FIIGVTVLVVAVPEGLPL). Over 462-875 (AVTISLAYSV…MWGRNVYDSI (414 aa)) the chain is Cytoplasmic. The active-site 4-aspartylphosphate intermediate is aspartate 499. Aspartate 820 and aspartate 824 together coordinate Mg(2+). The helical transmembrane segment at 876 to 895 (SKFLQFQLTVNVVAVIVAFT) threads the bilayer. The Extracellular portion of the chain corresponds to 896 to 905 (GACITQDSPL). A helical transmembrane segment spans residues 906–926 (KAVQMLWVNLIMDTFASLALA). The Cytoplasmic portion of the chain corresponds to 927 to 946 (TEPPTETLLLRKPYGRNKPL). Residues 947-969 (ISRTMMKNILGHAVYQLALIFTL) traverse the membrane as a helical segment. Residues 970 to 987 (LFVGEKMFQIDSGRNAPL) are Extracellular-facing. A helical membrane pass occupies residues 988–1009 (HSPPSEHYTIIFNTFVMMQLFN). Residues 1010 to 1028 (EINARKIHGERNVFDGIFR) are Cytoplasmic-facing. Residues 1029–1050 (NPIFCTIVLGTFAIQIVIVQFG) traverse the membrane as a helical segment. Residues 1051–1060 (GKPFSCSPLQ) lie on the Extracellular side of the membrane. The chain crosses the membrane as a helical span at residues 1061 to 1082 (LDQWMWCIFIGLGELVWGQVIA). Residues 1083–1243 (TIPTSRLKFL…SPIHSLETSL (161 aa)) are Cytoplasmic-facing. Residues glutamate 1120, arginine 1132, and leucine 1134 each carry the phosphoserine modification. A calmodulin-binding subdomain A region spans residues 1123–1140 (LRRGQILWFRGLNRIQTQ). Threonine 1139 carries the phosphothreonine; by PKC modification. Residues 1141 to 1150 (IRVVKAFRSS) are calmodulin-binding subdomain B. Phosphoserine occurs at positions 1146, 1151, 1163, 1165, 1177, and 1178. A Phosphothreonine modification is found at threonine 1188. The tract at residues 1194 to 1243 (AALKQNSSPPSSLNKNNSAIDSGINLTTDTSKSATSSSPGSPIHSLETSL) is disordered. Composition is skewed to low complexity over residues 1196-1211 (LKQN…KNNS) and 1220-1234 (TTDT…SPGS). Serine 1201 is subject to Phosphoserine; by PKA. Serine 1211 is subject to Phosphoserine.

It belongs to the cation transport ATPase (P-type) (TC 3.A.3) family. Type IIB subfamily. In terms of assembly, interacts with PDZD11. As to expression, mainly expressed in brain cortex. Found in low levels in skeletal muscle, heart muscle, stomach, liver, kidney and lung. Isoforms containing segment B are found in brain cortex and at low levels in other tissues. Isoforms containing segments X and W are found at low levels in all tissues. Isoforms containing segment A and segment Z are found at low levels in skeletal muscle and heart muscle.

Its subcellular location is the cell membrane. It is found in the synapse. The protein localises to the apical cell membrane. The protein resides in the basolateral cell membrane. It carries out the reaction Ca(2+)(in) + ATP + H2O = Ca(2+)(out) + ADP + phosphate + H(+). Up-regulated by calmodulin which increases the affinity of the pump for Ca(2+) ions. Its function is as follows. ATP-driven Ca(2+) ion pump involved in the maintenance of basal intracellular Ca(2+) levels in specialized cells of cerebellar circuit and vestibular and cochlear systems. Uses ATP as an energy source to transport cytosolic Ca(2+) ions across the plasma membrane to the extracellular compartment. Has fast activation and Ca(2+) clearance rate suited to control fast neuronal Ca(2+) dynamics. At parallel fiber to Purkinje neuron synapse, mediates presynaptic Ca(2+) efflux in response to climbing fiber-induced Ca(2+) rise. Provides for fast return of Ca(2+) concentrations back to their resting levels, ultimately contributing to long-term depression induction and motor learning. Plays an essential role in hearing and balance. In cochlear hair cells, shuttles Ca(2+) ions from stereocilia to the endolymph and dissipates Ca(2+) transients generated by the opening of the mechanoelectrical transduction channels. Regulates Ca(2+) levels in the vestibular system, where it contributes to the formation of otoconia. In non-excitable cells, regulates Ca(2+) signaling through spatial control of Ca(2+) ions extrusion and dissipation of Ca(2+) transients generated by store-operated channels. In lactating mammary gland, allows for the high content of Ca(2+) ions in the milk. This chain is Plasma membrane calcium-transporting ATPase 2, found in Homo sapiens (Human).